We begin with the raw amino-acid sequence, 345 residues long: Anthranilate phosphoribosyltransferase (345 aa).

5-phospho-alpha-D-ribose 1-diphosphate is bound by residues G84, 87-88, T92, 94-97, 112-120, and S124; these read GD, NIST, and KHGNRSVSS. G84 contributes to the anthranilate binding site. S96 provides a ligand contact to Mg(2+). N115 is a binding site for anthranilate. Anthranilate is bound at residue R170. Mg(2+) contacts are provided by D229 and E230.

The protein belongs to the anthranilate phosphoribosyltransferase family. As to quaternary structure, homodimer. Mg(2+) is required as a cofactor.

The catalysed reaction is N-(5-phospho-beta-D-ribosyl)anthranilate + diphosphate = 5-phospho-alpha-D-ribose 1-diphosphate + anthranilate. It participates in amino-acid biosynthesis; L-tryptophan biosynthesis; L-tryptophan from chorismate: step 2/5. Catalyzes the transfer of the phosphoribosyl group of 5-phosphorylribose-1-pyrophosphate (PRPP) to anthranilate to yield N-(5'-phosphoribosyl)-anthranilate (PRA). The polypeptide is Anthranilate phosphoribosyltransferase (Xanthomonas oryzae pv. oryzae (strain MAFF 311018)).